The following is a 391-amino-acid chain: uncharacterized protein (391 aa).

The next 12 membrane-spanning stretches (helical) occupy residues 7–27 (FILV…LPVI), 39–59 (AING…SPFM), 66–88 (LGFK…GFIW), 92–111 (VWVW…MLHF), 131–151 (SIYG…VPLV), 156–176 (SLPF…VFFL), 197–217 (FYQA…YGFL), 239–259 (VAII…PLGI), 269–289 (VLLV…VFPS), 292–312 (VIGG…TLGI), 329–349 (LLCG…GGWY), and 356–376 (ANLF…LVLG).

It belongs to the major facilitator superfamily.

The protein resides in the cell membrane. This is an uncharacterized protein from Bacillus subtilis (strain 168).